A 120-amino-acid polypeptide reads, in one-letter code: Ribonuclease P protein component (120 aa).

The protein belongs to the RnpA family. As to quaternary structure, consists of a catalytic RNA component (M1 or rnpB) and a protein subunit.

It catalyses the reaction Endonucleolytic cleavage of RNA, removing 5'-extranucleotides from tRNA precursor.. Functionally, RNaseP catalyzes the removal of the 5'-leader sequence from pre-tRNA to produce the mature 5'-terminus. It can also cleave other RNA substrates such as 4.5S RNA. The protein component plays an auxiliary but essential role in vivo by binding to the 5'-leader sequence and broadening the substrate specificity of the ribozyme. This is Ribonuclease P protein component from Desulfotalea psychrophila (strain LSv54 / DSM 12343).